The primary structure comprises 127 residues: Large ribosomal subunit protein bL17 (127 aa).

It belongs to the bacterial ribosomal protein bL17 family. In terms of assembly, part of the 50S ribosomal subunit. Contacts protein L32.

The chain is Large ribosomal subunit protein bL17 from Fervidobacterium nodosum (strain ATCC 35602 / DSM 5306 / Rt17-B1).